A 536-amino-acid polypeptide reads, in one-letter code: MSKFVFVTGGVVSSIGKGIVAASLGRLLKSRGYSVSILKLDPYLNVDPGTMSPFQHGEVFVTEDGAETDLDLGHYERFTDTAMTRLNSVTTGSIYQAVINKERRGSYNGGTVQVIPHITGEIRERIHRVASNSNADIVITEIGGTVGDIESLPFLEAIREFKNDVNKNDVTYIHVTLLPYIKTSGEIKTKPTQHSVKELRSIGIQPDLLVCRSDKEINDSLKRKLSGFCGVNLNCVIEALDADSIYSVPLSLKKEGLCKETLRCLDLEDKECDLESWEKIIHNLRNPGNPIKVALVGKYIELGDAYLSVVEALRHACIEQKAFLDLHWVSAEMIEEKSAEEYLHDVDAIVVPGGFGNRGVNGKIASIKFAREKKIPFLGLCLGMQCAVIEWARNVVQLPGASSSELDPESENPVIHLLPEQEDIVDLGGTMRLGVYPCRLQKNTTGKELYNEDVIYERHRHRYEFNNFYKQIFVDSGYKISGTSPDGRLVELIELVNHPYFLACQYHPEFLSRPGKPHPLFKGLIKASREKLEQSK.

Residues 1-267 (MSKFVFVTGG…CKETLRCLDL (267 aa)) form an amidoligase domain region. Ser-13 contributes to the CTP binding site. Ser-13 lines the UTP pocket. ATP is bound by residues 14–19 (SIGKGI) and Asp-71. 2 residues coordinate Mg(2+): Asp-71 and Glu-141. CTP-binding positions include 148 to 150 (DIE), 188 to 193 (KTKPTQ), and Lys-224. UTP is bound by residues 188–193 (KTKPTQ) and Lys-224. In terms of domain architecture, Glutamine amidotransferase type-1 spans 292–534 (KVALVGKYIE…IKASREKLEQ (243 aa)). Gly-354 lines the L-glutamine pocket. The active-site Nucleophile; for glutamine hydrolysis is the Cys-381. Residues 382-385 (LGMQ), Glu-405, and Arg-462 contribute to the L-glutamine site. Residues His-507 and Glu-509 contribute to the active site.

The protein belongs to the CTP synthase family. In terms of assembly, homotetramer.

It catalyses the reaction UTP + L-glutamine + ATP + H2O = CTP + L-glutamate + ADP + phosphate + 2 H(+). The catalysed reaction is L-glutamine + H2O = L-glutamate + NH4(+). The enzyme catalyses UTP + NH4(+) + ATP = CTP + ADP + phosphate + 2 H(+). The protein operates within pyrimidine metabolism; CTP biosynthesis via de novo pathway; CTP from UDP: step 2/2. Its activity is regulated as follows. Allosterically activated by GTP, when glutamine is the substrate; GTP has no effect on the reaction when ammonia is the substrate. The allosteric effector GTP functions by stabilizing the protein conformation that binds the tetrahedral intermediate(s) formed during glutamine hydrolysis. Inhibited by the product CTP, via allosteric rather than competitive inhibition. Catalyzes the ATP-dependent amination of UTP to CTP with either L-glutamine or ammonia as the source of nitrogen. Regulates intracellular CTP levels through interactions with the four ribonucleotide triphosphates. This Prochlorococcus marinus (strain MIT 9515) protein is CTP synthase.